The chain runs to 208 residues: Large ribosomal subunit protein uL3 (208 aa).

Gln-149 carries the N5-methylglutamine modification.

Belongs to the universal ribosomal protein uL3 family. Part of the 50S ribosomal subunit. Forms a cluster with proteins L14 and L19. In terms of processing, methylated by PrmB.

Functionally, one of the primary rRNA binding proteins, it binds directly near the 3'-end of the 23S rRNA, where it nucleates assembly of the 50S subunit. This chain is Large ribosomal subunit protein uL3, found in Haemophilus influenzae (strain 86-028NP).